We begin with the raw amino-acid sequence, 1413 residues long: ABC-type transporter vrcC (1413 aa).

The ABC transporter 1 domain occupies Val108–Glu365. An N-linked (GlcNAc...) asparagine glycan is attached at Asn289. Residues Val476–Tyr496 traverse the membrane as a helical segment. Asn501 carries an N-linked (GlcNAc...) asparagine glycan. 2 helical membrane passes run Ala510–Leu530 and Val564–Gly584. Asn675 carries an N-linked (GlcNAc...) asparagine glycan. A helical transmembrane segment spans residues Ile683–Phe703. Positions Ser725–Arg748 are disordered. N-linked (GlcNAc...) asparagine glycosylation is present at Asn738. Basic and acidic residues predominate over residues Ala739–Arg748. The ABC transporter 2 domain maps to Phe761–Gly1003. The next 6 helical transmembrane spans lie at Ile1105 to Leu1125, Ile1142 to Thr1162, Leu1191 to Met1211, Leu1230 to Leu1250, Leu1266 to Phe1286, and Val1290 to Val1310. N-linked (GlcNAc...) asparagine glycosylation is present at Asn1324. Residues Phe1378–Trp1398 form a helical membrane-spanning segment.

Belongs to the ABC transporter superfamily. ABCG family. PDR (TC 3.A.1.205) subfamily.

It localises to the cell membrane. In terms of biological role, ABC-type transporter; part of the gene cluster that mediates the biosynthesis of the sesterterpene variecolin. VrcC is probably involved in the secretion of variecolin. The sequence is that of ABC-type transporter vrcC from Aspergillus aculeatus (strain ATCC 16872 / CBS 172.66 / WB 5094).